The primary structure comprises 451 residues: Probable gamma-glutamyl phosphate reductase (451 aa).

The protein belongs to the gamma-glutamyl phosphate reductase family.

It catalyses the reaction L-glutamate 5-semialdehyde + phosphate + NADP(+) = L-glutamyl 5-phosphate + NADPH + H(+). The protein operates within amino-acid biosynthesis; L-proline biosynthesis; L-glutamate 5-semialdehyde from L-glutamate: step 2/2. In terms of biological role, catalyzes the NADPH dependent reduction of L-gamma-glutamyl 5-phosphate into L-glutamate 5-semialdehyde and phosphate. The product spontaneously undergoes cyclization to form 1-pyrroline-5-carboxylate. The protein is Probable gamma-glutamyl phosphate reductase (pro1) of Schizosaccharomyces pombe (strain 972 / ATCC 24843) (Fission yeast).